A 454-amino-acid polypeptide reads, in one-letter code: tRNA modification GTPase MnmE (454 aa).

The (6S)-5-formyl-5,6,7,8-tetrahydrofolate site is built by arginine 23, glutamate 80, and lysine 120. One can recognise a TrmE-type G domain in the interval 216–377 (GMKVVIAGRP…LRNHLKQSMG (162 aa)). A K(+)-binding site is contributed by asparagine 226. Residues 226–231 (NAGKSS), 245–251 (TDIAGTT), 270–273 (DTAG), 335–338 (NKAD), and 358–360 (SAR) contribute to the GTP site. Serine 230 is a Mg(2+) binding site. The K(+) site is built by threonine 245, isoleucine 247, and threonine 250. Residue threonine 251 participates in Mg(2+) binding. Lysine 454 provides a ligand contact to (6S)-5-formyl-5,6,7,8-tetrahydrofolate.

Belongs to the TRAFAC class TrmE-Era-EngA-EngB-Septin-like GTPase superfamily. TrmE GTPase family. Homodimer. Heterotetramer of two MnmE and two MnmG subunits. The cofactor is K(+).

It is found in the cytoplasm. Functionally, exhibits a very high intrinsic GTPase hydrolysis rate. Involved in the addition of a carboxymethylaminomethyl (cmnm) group at the wobble position (U34) of certain tRNAs, forming tRNA-cmnm(5)s(2)U34. In Escherichia coli (strain 55989 / EAEC), this protein is tRNA modification GTPase MnmE.